Reading from the N-terminus, the 1596-residue chain is Cellulose synthase 2 (1596 aa).

The tract at residues 1 to 749 is catalytic; that stretch reads MIYRAILKRL…RSARHGATAS (749 aa). 2 consecutive transmembrane segments (helical) span residues 25 to 45 and 106 to 126; these read SPFVMMAVGVFLMLMAGGVTI and LSLLLVAAELYALLTLCLSYF. The interval 145 to 238 is catalytic subdomain A; sequence DWPVVDVYVP…YVVIFDCDHI (94 aa). D187 is a catalytic residue. Residues D234 and D236 each coordinate substrate. Positions 315-375 are catalytic subdomain B; sequence SAVLGIGGFA…GQRVRWARGM (61 aa). D331 is an active-site residue. The next 4 membrane-spanning stretches (helical) occupy residues 396 to 416, 421 to 441, 505 to 525, and 544 to 564; these read LCYLSAMSHFLFAIPRLVFLA, FLFLGQNIIAASPFAILVYAF, FDLNAVYPNVILAVILALALV, and FALNTLWVAVSLIIVLASIAV. The PilZ domain maps to 570–669; the sequence is QIRHKPRVRA…ERQIVEFMFG (100 aa). Residues 750 to 1596 are cyclic di-GMP binding domain; sequence LIVLLGLPAA…RVKDTTDASH (847 aa). 2 disordered regions span residues 769–812 and 828–868; these read SRAT…IAPA and TGPA…APPI. Residues 783–809 are compositionally biased toward pro residues; that stretch reads VEPPPVNAPPPPSLPQPPGTLPTPPQI. The helical transmembrane segment at 1553–1573 threads the bilayer; it reads LTLYVLGLVGAGLVAAAAVRL.

It in the N-terminal section; belongs to the glycosyltransferase 2 family. In the C-terminal section; belongs to the AcsB/BcsB family.

The protein resides in the cell inner membrane. The enzyme catalyses [(1-&gt;4)-beta-D-glucosyl](n) + UDP-alpha-D-glucose = [(1-&gt;4)-beta-D-glucosyl](n+1) + UDP + H(+). This Novacetimonas hansenii (Komagataeibacter hansenii) protein is Cellulose synthase 2 (acsAII).